The chain runs to 315 residues: MALYHLFSHPIERAYRAGLCSKAALFLLLTTALTYIPPLLVAFRSHGFWLKRSSYEEQPNVRFQHQVLLVALLGPEPEAFLAWSTFPTFNRLQGAHLRVPLVSSREEDRNQDGKMDVLYFKLELPLQPTEHVLGVQLILTFSYQLHRMSTFEMQSMAFLQSSFAVPGSQLYVNGDLRLQQKQPLSYRGLDIRYNVSVINGTSPFAQDYDLTHIVAAYQERNVTTVLSDPNPIWLVGRAAEAPFVIHAVIRYPTEVISYQPGFWEMIKFAWIQYVSILLIFLWVFERIKIFVFQNQVVTSIPVAVPQGEIRKEHLS.

Residues 23–43 (AALFLLLTTALTYIPPLLVAF) form a helical membrane-spanning segment. Residues Asn-194, Asn-199, and Asn-221 are each glycosylated (N-linked (GlcNAc...) asparagine). The chain crosses the membrane as a helical span at residues 262–282 (FWEMIKFAWIQYVSILLIFLW).

The protein belongs to the TMEM231 family. Part of the tectonic-like complex (also named B9 complex). Interacts with TMEM107.

It is found in the cell projection. It localises to the cilium membrane. Functionally, transmembrane component of the tectonic-like complex, a complex localized at the transition zone of primary cilia and acting as a barrier that prevents diffusion of transmembrane proteins between the cilia and plasma membranes. Required for ciliogenesis and sonic hedgehog/SHH signaling. The protein is Transmembrane protein 231 (Tmem231) of Mus musculus (Mouse).